A 227-amino-acid polypeptide reads, in one-letter code: tRNA (guanine-N(1)-)-methyltransferase (227 aa).

S-adenosyl-L-methionine contacts are provided by residues Gly110 and 129–134 (IGDYVL).

This sequence belongs to the RNA methyltransferase TrmD family. In terms of assembly, homodimer.

It is found in the cytoplasm. The catalysed reaction is guanosine(37) in tRNA + S-adenosyl-L-methionine = N(1)-methylguanosine(37) in tRNA + S-adenosyl-L-homocysteine + H(+). Functionally, specifically methylates guanosine-37 in various tRNAs. This chain is tRNA (guanine-N(1)-)-methyltransferase, found in Mycoplasmopsis synoviae (strain 53) (Mycoplasma synoviae).